A 209-amino-acid chain; its full sequence is MTKKPIVVGVTGGSGSGKTSVTKAICDHFSGHSILMIAQDVYYHDQTDISFEDRLKVNYDHPLAFDTDLLISHIAALRRYETIEKPIYDYEKYTRKQEVEIQEPREVIILEGILILEDKRLRDLMDIKVYVDTDDDIRFIRRLLRDMKERGRTMDSVIDQYLSVVKPMHNEFIEPTKKFADIIIPEGGENHVAIDLMTTKIESILQKHV.

Position 12 to 19 (12 to 19 (GGSGSGKT)) interacts with ATP.

This sequence belongs to the uridine kinase family.

It localises to the cytoplasm. It carries out the reaction uridine + ATP = UMP + ADP + H(+). It catalyses the reaction cytidine + ATP = CMP + ADP + H(+). Its pathway is pyrimidine metabolism; CTP biosynthesis via salvage pathway; CTP from cytidine: step 1/3. It functions in the pathway pyrimidine metabolism; UMP biosynthesis via salvage pathway; UMP from uridine: step 1/1. The chain is Uridine kinase from Listeria welshimeri serovar 6b (strain ATCC 35897 / DSM 20650 / CCUG 15529 / CIP 8149 / NCTC 11857 / SLCC 5334 / V8).